The following is a 199-amino-acid chain: Potassium-transporting ATPase KdpC subunit (199 aa).

The helical transmembrane segment at 7-27 (PALVMTAALCLITGIIYPGLI) threads the bilayer.

This sequence belongs to the KdpC family. As to quaternary structure, the system is composed of three essential subunits: KdpA, KdpB and KdpC.

The protein resides in the cell inner membrane. Its function is as follows. Part of the high-affinity ATP-driven potassium transport (or Kdp) system, which catalyzes the hydrolysis of ATP coupled with the electrogenic transport of potassium into the cytoplasm. This subunit acts as a catalytic chaperone that increases the ATP-binding affinity of the ATP-hydrolyzing subunit KdpB by the formation of a transient KdpB/KdpC/ATP ternary complex. The protein is Potassium-transporting ATPase KdpC subunit of Gemmatimonas aurantiaca (strain DSM 14586 / JCM 11422 / NBRC 100505 / T-27).